We begin with the raw amino-acid sequence, 191 residues long: Protein YceI (191 aa).

A signal peptide spans 1–22 (MKKSLLGLTFASLMFSAGSAVA).

It belongs to the UPF0312 family. Type 1 subfamily.

It localises to the periplasm. The sequence is that of Protein YceI from Shigella boydii serotype 4 (strain Sb227).